A 479-amino-acid chain; its full sequence is Protein phosphatase 1B (479 aa).

The span at 1–14 (MGAFLDKPKTEKHN) shows a compositional bias: basic and acidic residues. The tract at residues 1 to 20 (MGAFLDKPKTEKHNAHGAGN) is disordered. Gly2 is lipidated: N-myristoyl glycine. Lys12 is covalently cross-linked (Glycyl lysine isopeptide (Lys-Gly) (interchain with G-Cter in ISG15)). The region spanning 23–295 (RYGLSSMQGW…DNMSIVLVCF (273 aa)) is the PPM-type phosphatase domain. Mn(2+) contacts are provided by Asp60 and Gly61. A Glycyl lysine isopeptide (Lys-Gly) (interchain with G-Cter in ISG15) cross-link involves residue Lys142. Mn(2+) contacts are provided by Asp243 and Asp286. Position 386 is a phosphoserine (Ser386). The tract at residues 423–479 (VEGEESPAEPAATATSSNSDAGNPVTMQESHTESESGLAELDSSNEDAGTKMSGEKI) is disordered. A compositionally biased stretch (low complexity) spans 430–439 (AEPAATATSS). A compositionally biased stretch (polar residues) spans 440 to 451 (NSDAGNPVTMQE).

The protein belongs to the PP2C family. As to quaternary structure, monomer. Interacts with PAK6. Interacts with the phosphorylated form of IKBKB/IKKB. Mg(2+) is required as a cofactor. Mn(2+) serves as cofactor. In terms of processing, isgylation negatively regulates its activity. Post-translationally, N-myristoylation is essential for the recognition of its substrates for dephosphorylation. In terms of tissue distribution, highly expressed in heart and skeletal muscle.

It is found in the cytoplasm. The protein localises to the cytosol. The protein resides in the membrane. The enzyme catalyses O-phospho-L-seryl-[protein] + H2O = L-seryl-[protein] + phosphate. The catalysed reaction is O-phospho-L-threonyl-[protein] + H2O = L-threonyl-[protein] + phosphate. Its function is as follows. Enzyme with a broad specificity. Dephosphorylates CDK2 and CDK6 in vitro. Dephosphorylates PRKAA1 and PRKAA2. Inhibits TBK1-mediated antiviral signaling by dephosphorylating it at 'Ser-172'. Plays an important role in the termination of TNF-alpha-mediated NF-kappa-B activation through dephosphorylating and inactivating IKBKB/IKKB. The sequence is that of Protein phosphatase 1B (PPM1B) from Homo sapiens (Human).